We begin with the raw amino-acid sequence, 520 residues long: Transactivator/viroplasmin protein (520 aa).

A disordered region spans residues 487–520 (KDASADSGPKDGPPPTRSIVEKEDVPTTSSKQVD).

It belongs to the caulimoviridae viroplasmin family.

It localises to the host cytoplasm. Enhances the ribosomal termination-reinitiation event leading to the translation of major open reading frames on the polycistronic viral RNAs. The sequence is that of Transactivator/viroplasmin protein from Arabidopsis thaliana (Mouse-ear cress).